Consider the following 238-residue polypeptide: Cysteine-rich venom protein pseudechetoxin-like (238 aa).

Positions 1-19 (MIAFIVLLSLAAVLQQSSG) are cleaved as a signal peptide. The propeptide occupies 20-28 (TVDFASESS). In terms of domain architecture, SCP spans 38–164 (VDKHNALRRS…STKYLYVCQY (127 aa)). 8 disulfides stabilise this stretch: Cys75-Cys153, Cys92-Cys165, Cys148-Cys162, Cys184-Cys191, Cys187-Cys196, Cys200-Cys233, Cys209-Cys227, and Cys218-Cys231. In terms of domain architecture, ShKT spans 200 to 233 (CKYEDDFSNCKALAKNSKCQTEWIKSKCPAACFC).

This sequence belongs to the CRISP family. In terms of tissue distribution, expressed by the venom gland.

The protein resides in the secreted. Blocks olfactory (CNGA2) and retinal (CNGA1) CNG channel currents. Does not affect neither depolarization- nor caffeine-induced contraction of smooth muscle. This Notechis scutatus scutatus (Mainland tiger snake) protein is Cysteine-rich venom protein pseudechetoxin-like.